Reading from the N-terminus, the 466-residue chain is Ribosomal protein uS12 methylthiotransferase RimO (466 aa).

The MTTase N-terminal domain maps to 31–141 (PTIGMVSLGC…VLDAVHGAVP (111 aa)). Positions 40, 76, 105, 172, 176, and 179 each coordinate [4Fe-4S] cluster. The region spanning 158 to 397 (LTPRHYSYLK…MAKAQAISEA (240 aa)) is the Radical SAM core domain. Positions 400 to 466 (AARVGQVIEV…GEYDLWGRLR (67 aa)) constitute a TRAM domain.

Belongs to the methylthiotransferase family. RimO subfamily. Requires [4Fe-4S] cluster as cofactor.

It localises to the cytoplasm. The catalysed reaction is L-aspartate(89)-[ribosomal protein uS12]-hydrogen + (sulfur carrier)-SH + AH2 + 2 S-adenosyl-L-methionine = 3-methylsulfanyl-L-aspartate(89)-[ribosomal protein uS12]-hydrogen + (sulfur carrier)-H + 5'-deoxyadenosine + L-methionine + A + S-adenosyl-L-homocysteine + 2 H(+). Its function is as follows. Catalyzes the methylthiolation of an aspartic acid residue of ribosomal protein uS12. The polypeptide is Ribosomal protein uS12 methylthiotransferase RimO (Ruegeria pomeroyi (strain ATCC 700808 / DSM 15171 / DSS-3) (Silicibacter pomeroyi)).